The following is an 84-amino-acid chain: Mitochondrial import inner membrane translocase subunit Tim9 (84 aa).

The Twin CX3C motif signature appears at 28 to 52 (CFMDCVKDFTTREVKPEETTCSESC). Intrachain disulfides connect C28–C52 and C32–C48.

It belongs to the small Tim family. As to quaternary structure, heterohexamer; composed of 3 copies of TIMM9 and 3 copies of TIMM10/TIM10A, named soluble 70 kDa complex. The complex forms a 6-bladed alpha-propeller structure and associates with the TIMM22 component of the TIM22 complex. Interacts with multi-pass transmembrane proteins in transit.

It is found in the mitochondrion inner membrane. Functionally, mitochondrial intermembrane chaperone that participates in the import and insertion of multi-pass transmembrane proteins into the mitochondrial inner membrane. May also be required for the transfer of beta-barrel precursors from the TOM complex to the sorting and assembly machinery (SAM complex) of the outer membrane. Acts as a chaperone-like protein that protects the hydrophobic precursors from aggregation and guide them through the mitochondrial intermembrane space. This chain is Mitochondrial import inner membrane translocase subunit Tim9 (timm9), found in Danio rerio (Zebrafish).